We begin with the raw amino-acid sequence, 162 residues long: Caveolin-2 (162 aa).

Over 1–86 (MGLETEKADV…FEISKYVMYK (86 aa)) the chain is Cytoplasmic. At Y19 the chain carries Phosphotyrosine; by SRC. The residue at position 20 (S20) is a Phosphoserine. Y27 bears the Phosphotyrosine; by SRC mark. Phosphoserine is present on S36. Residues 87–107 (FLTVFLAIPLAFAAGILFATL) constitute an intramembrane region (helical). At 108–162 (SCLHIWIIMPFVKTCLMVLPSVQTIWKSVTDVIIAPLCTSVGRSLSSISLQLSHD) the chain is on the cytoplasmic side.

This sequence belongs to the caveolin family. Monomer or homodimer. Interacts with CAV1; the interaction forms a stable heterooligomeric complex that is required for targeting to lipid rafts and for caveolae formation. Tyrosine phosphorylated forms do not form heterooligomers with the Tyr-19-phosphorylated form existing as a monomer or dimer, and the Tyr-27-form as a monomer only. Interacts (tyrosine phosphorylated form) with the SH2 domain-containing proteins, RASA1, NCK1 and SRC. Interacts (tyrosine phosphorylated form) with INSR, the interaction (Tyr-27-phosphorylated form) is increased on insulin stimulation. Interacts (Tyr-19 phosphorylated form) with MAPK1 (phosphorylated form); the interaction, promoted by insulin, leads to nuclear location and MAPK1 activation. Interacts with STAT3; the interaction is increased on insulin-induced tyrosine phosphorylation leading to STAT activation. Phosphorylated on serine and tyrosine residues. Phosphorylation on Ser-36 appears to modulate mitosis in endothelial cells. Phosphorylation on both Tyr-19 and Tyr-27 is required for insulin-induced 'Ser-727' phosphorylation of STAT3 and its activation. Phosphorylation on Tyr-19 is required for insulin-induced phosphorylation of MAPK1 and DNA binding of STAT3. Tyrosine phosphorylation is induced by both EGF and insulin.

The protein resides in the nucleus. Its subcellular location is the cytoplasm. The protein localises to the golgi apparatus membrane. It localises to the cell membrane. It is found in the membrane. The protein resides in the caveola. May act as a scaffolding protein within caveolar membranes. Interacts directly with G-protein alpha subunits and can functionally regulate their activity. Acts as an accessory protein in conjunction with CAV1 in targeting to lipid rafts and driving caveolae formation. The Ser-36 phosphorylated form has a role in modulating mitosis in endothelial cells. Positive regulator of cellular mitogenesis of the MAPK signaling pathway. Required for the insulin-stimulated nuclear translocation and activation of MAPK1 and STAT3, and the subsequent regulation of cell cycle progression. This chain is Caveolin-2 (CAV2), found in Eulemur macaco macaco (Black lemur).